The chain runs to 29 residues: Small toxic protein ZorP (29 aa).

Residues 10–27 (VLIAVLELLVALLRLIDL) form a helical membrane-spanning segment.

Its subcellular location is the membrane. Its function is as follows. Toxic component of a type I toxin-antitoxin (TA) system. Overexpression leads to cell stasis and a decrease in colony-forming units. Probably repressed by cognate small RNA orzP. Base pairing occurs between 18 bases in the 5' UTR of zorP mRNA and the 5' end of OrzP sRNA. This chain is Small toxic protein ZorP, found in Escherichia coli O157:H7.